We begin with the raw amino-acid sequence, 132 residues long: Agouti-signaling protein (132 aa).

The first 22 residues, 1–22, serve as a signal peptide directing secretion; it reads MDVTRLLLATLLVFLCFFTACS. N-linked (GlcNAc...) asparagine glycosylation occurs at Asn-39. Residues 61-87 are disordered; sequence QISRKEAEKKRSSKKEASMKKVARPRT. The span at 63–79 shows a compositional bias: basic and acidic residues; the sequence is SRKEAEKKRSSKKEASM. Disulfide bonds link Cys-93/Cys-108, Cys-100/Cys-114, Cys-107/Cys-125, Cys-111/Cys-132, and Cys-116/Cys-123. One can recognise an Agouti domain in the interval 93–132; sequence CVATRDSCKPPAPACCDPCASCQCRFFRSACSCRVLSLNC.

Its subcellular location is the secreted. Involved in the regulation of melanogenesis. The binding of ASP to MC1R precludes alpha-MSH initiated signaling and thus blocks production of cAMP, leading to a down-regulation of eumelanogenesis (brown/black pigment) and thus increasing synthesis of pheomelanin (yellow/red pigment). This chain is Agouti-signaling protein (ASIP), found in Macaca nigrescens (Gorontalo macaque).